A 274-amino-acid polypeptide reads, in one-letter code: 2,3,4,5-tetrahydropyridine-2,6-dicarboxylate N-succinyltransferase (274 aa).

2 residues coordinate substrate: Arg-106 and Asp-143.

It belongs to the transferase hexapeptide repeat family. In terms of assembly, homotrimer.

It localises to the cytoplasm. The enzyme catalyses (S)-2,3,4,5-tetrahydrodipicolinate + succinyl-CoA + H2O = (S)-2-succinylamino-6-oxoheptanedioate + CoA. It functions in the pathway amino-acid biosynthesis; L-lysine biosynthesis via DAP pathway; LL-2,6-diaminopimelate from (S)-tetrahydrodipicolinate (succinylase route): step 1/3. The polypeptide is 2,3,4,5-tetrahydropyridine-2,6-dicarboxylate N-succinyltransferase (Acidovorax sp. (strain JS42)).